The sequence spans 304 residues: Acetyl-coenzyme A carboxylase carboxyl transferase subunit beta (304 aa).

The 270-residue stretch at 25–294 (VWTKCDSCGQ…PSVVESKADT (270 aa)) folds into the CoA carboxyltransferase N-terminal domain. Zn(2+) is bound by residues C29, C32, C48, and C51. The segment at 29–51 (CDSCGQVLYRAELERNLEVCPKC) adopts a C4-type zinc-finger fold.

The protein belongs to the AccD/PCCB family. In terms of assembly, acetyl-CoA carboxylase is a heterohexamer composed of biotin carboxyl carrier protein (AccB), biotin carboxylase (AccC) and two subunits each of ACCase subunit alpha (AccA) and ACCase subunit beta (AccD). Zn(2+) is required as a cofactor.

It localises to the cytoplasm. It carries out the reaction N(6)-carboxybiotinyl-L-lysyl-[protein] + acetyl-CoA = N(6)-biotinyl-L-lysyl-[protein] + malonyl-CoA. Its pathway is lipid metabolism; malonyl-CoA biosynthesis; malonyl-CoA from acetyl-CoA: step 1/1. Functionally, component of the acetyl coenzyme A carboxylase (ACC) complex. Biotin carboxylase (BC) catalyzes the carboxylation of biotin on its carrier protein (BCCP) and then the CO(2) group is transferred by the transcarboxylase to acetyl-CoA to form malonyl-CoA. The chain is Acetyl-coenzyme A carboxylase carboxyl transferase subunit beta from Yersinia pestis bv. Antiqua (strain Nepal516).